A 306-amino-acid polypeptide reads, in one-letter code: Isoaspartyl peptidase/L-asparaginase (306 aa).

Residue T174 is the Nucleophile of the active site. Substrate-binding positions include R202–D205 and T224–G227.

It belongs to the Ntn-hydrolase family. Heterotetramer of two alpha and two beta chains arranged as a dimer of alpha/beta heterodimers. Cleaved into an alpha and beta chain by autocatalysis; this activates the enzyme. The N-terminal residue of the beta subunit is responsible for the nucleophile hydrolase activity. As to expression, developing seeds.

The catalysed reaction is Cleavage of a beta-linked Asp residue from the N-terminus of a polypeptide.. Its function is as follows. Degrades proteins damaged by L-isoaspartyl residue formation (also known as beta-Asp residues). Also has L-asparaginase activity, which is used to liberate stored nitrogen during seed development. In Lupinus arboreus (Tree lupine), this protein is Isoaspartyl peptidase/L-asparaginase.